The primary structure comprises 886 residues: Peptidyl-lysine N-acetyltransferase PatZ (886 aa).

The region spanning 487–523 is the ATP-grasp domain; that stretch reads QPILQAYGMNTLPTWIASDSTEAVHIAEQIGYPVALK. Positions 726 to 881 constitute an N-acetyltransferase domain; that stretch reads CLFRPILPED…GIVGLTLNLA (156 aa).

In the N-terminal section; belongs to the acetate CoA ligase alpha subunit family. It in the central section; belongs to the acetate CoA ligase beta subunit family. As to quaternary structure, stable tetramer in solution. Oligomerizes to an octameric form by autoacetylation. Post-translationally, autoacetylated. Deacetylated by CobB.

The catalysed reaction is L-lysyl-[protein] + acetyl-CoA = N(6)-acetyl-L-lysyl-[protein] + CoA + H(+). Its function is as follows. Catalyzes the acetyl-CoA-dependent acetylation of lysine residues of a large number of target proteins. Acetylates RNase R in exponential phase cells and RNase II. Required for the glucose-dependent acetylation on multiple lysines of alpha, beta and beta' RNAP subunits. Also acetylates acetyl-coenzyme A synthetase (Acs) and the chromosomal replication initiator protein DnaA, and inhibits their activity. Overexpression leads to the acetylation of a large number of additional proteins and inhibits motility. The protein is Peptidyl-lysine N-acetyltransferase PatZ of Escherichia coli (strain K12).